The following is a 533-amino-acid chain: Multicopy suppressor of sporulation protein msa1 (533 aa).

The disordered stretch occupies residues 30-68 (DIPPGSLSENDNSTTFIKPPLETASSSTPIPSSSSSGVL). Residues 36 to 45 (LSENDNSTTF) are compositionally biased toward polar residues. Residues 54–68 (SSSTPIPSSSSSGVL) are compositionally biased toward low complexity. The RRM 1 domain occupies 79–158 (ACLFVASLNS…RHIRIERAKV (80 aa)). The disordered stretch occupies residues 237–292 (YKKKGSSPFSPPNAHSRRRKSQGKDQSNTPVIKAPAPIPFSVSSDPPSTMGRSNSA). Over residues 277–292 (SVSSDPPSTMGRSNSA) the composition is skewed to polar residues. Residues 365–441 (YSIFVGQLDP…KPLRVEFRQL (77 aa)) enclose the RRM 2 domain.

It localises to the cytoplasm. Its function is as follows. Negative regulator of sexual differentiation. Acts by repressing the transcription of meiosis-inducing, ste11-regulated genes. The sequence is that of Multicopy suppressor of sporulation protein msa1 (msa1) from Schizosaccharomyces pombe (strain 972 / ATCC 24843) (Fission yeast).